The chain runs to 105 residues: Precursor of CEP15 (105 aa).

Positions M1–S29 are cleaved as a signal peptide. A propeptide spanning residues T30–D90 is cleaved from the precursor. A compositionally biased stretch (low complexity) spans D68–S80. A disordered region spans residues D68–H105. P99 and P101 each carry hydroxyproline.

The protein belongs to the C-terminally encoded plant signaling peptide (CEP) family. In terms of assembly, interacts with CEP receptors (e.g. CEPR1 and CEPR2). The mature small signaling peptide is generated by proteolytic processing of the longer precursor.

The protein resides in the secreted. The protein localises to the extracellular space. It localises to the apoplast. In terms of biological role, extracellular signaling peptide that may regulate primary root growth rate and systemic nitrogen (N)-demand signaling. The chain is Precursor of CEP15 from Arabidopsis thaliana (Mouse-ear cress).